Consider the following 1078-residue polypeptide: Disheveled-associated activator of morphogenesis 1 (1078 aa).

Ser34 is modified (phosphoserine). Residues 45–420 (LPMPPVEELD…QIVIQNDKGQ (376 aa)) form the GBD/FH3 domain. Residues 437 to 526 (RMLVNENEVK…ELSRRAVCAS (90 aa)) adopt a coiled-coil conformation. Disordered stretches follow at residues 456 to 480 (RKEH…TQEK) and 524 to 585 (CASI…PLGA). In terms of domain architecture, FH1 spans 528 to 599 (PGGPSPGAPG…PGAPMGLALK (72 aa)). 2 stretches are compositionally biased toward pro residues: residues 530 to 539 (GPSPGAPGGP) and 548 to 585 (LLPP…PLGA). The FH2 domain occupies 600–1009 (KKSIPQPTNA…EERRARMEAQ (410 aa)). Residues 693 to 702 (AQNCNILLSR) form an actin-binding region. A compositionally biased stretch (basic and acidic residues) spans 987–1027 (KQENENMRKKKEEEERRARMEAQLKEQRERERKMRKAKENS). Disordered regions lie at residues 987 to 1034 (KQEN…GEFD) and 1055 to 1078 (RNRK…KLNF). Ser1027 and Ser1030 each carry phosphoserine. The DAD domain occupies 1027–1058 (SEESGEFDDLVSALRSGEVFDKDLSKLKRNRK). Residues 1067–1078 (SSRERPITKLNF) show a composition bias toward basic and acidic residues.

Belongs to the formin homology family. Homodimer. Interacts with CIP4, FNBP1 and FNBP1L. Interacts with the SH3 domains of Abl, BTK, endophilin, spectrin and SRC. Binds specifically to GTP-bound CDC42 and RHOA. Interacts with INTU; INTU mediates the indirect interaction between DAAM1 and NPHP4. Interacts (via coiled coil domain) with KANK1 (via coiled coil domain). In terms of tissue distribution, expressed in all tissues examined.

The protein resides in the cytoplasm. The protein localises to the cytoskeleton. It is found in the cilium basal body. Its function is as follows. Binds to disheveled (Dvl) and Rho, and mediates Wnt-induced Dvl-Rho complex formation. May play a role as a scaffolding protein to recruit Rho-GDP and Rho-GEF, thereby enhancing Rho-GTP formation. Can direct nucleation and elongation of new actin filaments. Involved in building functional cilia. Involved in the organization of the subapical actin network in multiciliated epithelial cells. Together with DAAM2, required for myocardial maturation and sarcomere assembly. During cell division, may regulate RHOA activation that signals spindle orientation and chromosomal segregation. This Homo sapiens (Human) protein is Disheveled-associated activator of morphogenesis 1 (DAAM1).